Consider the following 235-residue polypeptide: Ribonuclease 3 (235 aa).

Positions 7–135 (FAALEARLGH…VVAAVYLDGG (129 aa)) constitute an RNase III domain. Residue E48 participates in Mg(2+) binding. D52 is a catalytic residue. Mg(2+) is bound by residues D121 and E124. Residue E124 is part of the active site. Positions 160 to 229 (DPKTVLQEWA…ASAFLAREGV (70 aa)) constitute a DRBM domain.

The protein belongs to the ribonuclease III family. As to quaternary structure, homodimer. It depends on Mg(2+) as a cofactor.

The protein resides in the cytoplasm. The catalysed reaction is Endonucleolytic cleavage to 5'-phosphomonoester.. Functionally, digests double-stranded RNA. Involved in the processing of primary rRNA transcript to yield the immediate precursors to the large and small rRNAs (23S and 16S). Processes some mRNAs, and tRNAs when they are encoded in the rRNA operon. Processes pre-crRNA and tracrRNA of type II CRISPR loci if present in the organism. In Azorhizobium caulinodans (strain ATCC 43989 / DSM 5975 / JCM 20966 / LMG 6465 / NBRC 14845 / NCIMB 13405 / ORS 571), this protein is Ribonuclease 3.